A 346-amino-acid chain; its full sequence is Cytidine deaminase 5 (346 aa).

2 CMP/dCMP-type deaminase domains span residues 20 to 148 (TDHK…FGSE) and 183 to 304 (DLCS…ITGA). Residue 58–60 (NVE) coordinates substrate. His-71 provides a ligand contact to Zn(2+). Glu-73 serves as the catalytic Proton donor. The Zn(2+) site is built by Cys-104 and Cys-107.

The protein belongs to the cytidine and deoxycytidylate deaminase family. Homodimer. The cofactor is Zn(2+).

It carries out the reaction cytidine + H2O + H(+) = uridine + NH4(+). The catalysed reaction is 2'-deoxycytidine + H2O + H(+) = 2'-deoxyuridine + NH4(+). This enzyme scavenges exogenous and endogenous cytidine and 2'-deoxycytidine for UMP synthesis. This is Cytidine deaminase 5 (CDA5) from Arabidopsis thaliana (Mouse-ear cress).